Here is a 416-residue protein sequence, read N- to C-terminus: 4-hydroxy-3-methylbut-2-en-1-yl diphosphate synthase (flavodoxin) (416 aa).

Residues cysteine 304, cysteine 307, cysteine 350, and glutamate 357 each contribute to the [4Fe-4S] cluster site.

Belongs to the IspG family. It depends on [4Fe-4S] cluster as a cofactor.

It carries out the reaction (2E)-4-hydroxy-3-methylbut-2-enyl diphosphate + oxidized [flavodoxin] + H2O + 2 H(+) = 2-C-methyl-D-erythritol 2,4-cyclic diphosphate + reduced [flavodoxin]. The protein operates within isoprenoid biosynthesis; isopentenyl diphosphate biosynthesis via DXP pathway; isopentenyl diphosphate from 1-deoxy-D-xylulose 5-phosphate: step 5/6. Its function is as follows. Converts 2C-methyl-D-erythritol 2,4-cyclodiphosphate (ME-2,4cPP) into 1-hydroxy-2-methyl-2-(E)-butenyl 4-diphosphate. This is 4-hydroxy-3-methylbut-2-en-1-yl diphosphate synthase (flavodoxin) from Allorhizobium ampelinum (strain ATCC BAA-846 / DSM 112012 / S4) (Agrobacterium vitis (strain S4)).